We begin with the raw amino-acid sequence, 931 residues long: MDSVATDSKAFTSADFDSAGIAAAVDALAKQHSGREDMFRAAVVQFLKAELVKARAAAQAQLLQDRHGRHCAERLCVVQDEIIRILYAAATEHLYRSDVPSGAERMAVVATGGYGRGLMAPESDIDLLFILPYKQTAWGEQVAEAILYSLWDMGLKVGHATRSVDESIRQARGDMTIRTAILETRYLAGDKPLYDELVQRFDTEVVQGTAAEFVAAKLAEREERHRRGGQSRYLVEPNVKDGKGGLRDLHTLFWIAKYVYRVRETAELVERGVFDAHEYRTFRRCSDFLWSVRCNLHFVSGRPEERLSFDLQREIAVRLGYTSHPGMQDVERFMKHYFLVAKQVGNLTAILCAKLEDQQAKAAPVLSRMISRLTTGSTWRRVPESDDFIVDNNRINLAAPDVFKHDPVNLIRIFRLAQKNNLAFHPDAMRAVTRSLNMINAELRENPEANRLFMEILTSNDAETVLRRMNETGVLGHFISAFGRIVSMMQFNMYHHYTVDEHLIRCIGFLQEIERGGHDEFVLASDLMRKIRPEHRAVIYITVLLHDVAKGRPEDHSVAGAKIARRLCPRLGFNNADTELVAWLIEEHLTMSTVAQSRDLSDRRTIEKFAAVVQSVEQMKLLTILTTADIRGVGPGVWNGWKAQLLRTLYYETEPVLTGGFSEVNRAKRITAAQAEFRNAFTDWPEDELNTYIGRHYPAYWLKVELPRKIRHARFVRSSEDAGHKLAINVGFDPARGVTELTIFAMDHPWLLSIIAGACASAGANIVDAQIYTTTDGRALDTIAISREYERDEDEGRRATRIGETIEQVLEGKLRLPDAVARRTTRGKQHKAFSVEPEVSINNQWSELYTVIEVSGLDRPGLLYELTTAISKLNLNIASAHVATFGERARDVFYVTDLLGAQINAPTRQAAIKSALLHLLASEDAAAQPAA.

A uridylyltransferase region spans residues 1–383 (MDSVATDSKA…TTGSTWRRVP (383 aa)). Residues 384–739 (ESDDFIVDNN…VGFDPARGVT (356 aa)) form a uridylyl-removing region. The HD domain occupies 499 to 622 (VDEHLIRCIG…VQSVEQMKLL (124 aa)). ACT domains are found at residues 740 to 822 (ELTI…AVAR) and 851 to 931 (VIEV…QPAA).

The protein belongs to the GlnD family. The cofactor is Mg(2+).

The enzyme catalyses [protein-PII]-L-tyrosine + UTP = [protein-PII]-uridylyl-L-tyrosine + diphosphate. The catalysed reaction is [protein-PII]-uridylyl-L-tyrosine + H2O = [protein-PII]-L-tyrosine + UMP + H(+). Its activity is regulated as follows. Uridylyltransferase (UTase) activity is inhibited by glutamine, while glutamine activates uridylyl-removing (UR) activity. In terms of biological role, modifies, by uridylylation and deuridylylation, the PII regulatory proteins (GlnB and homologs), in response to the nitrogen status of the cell that GlnD senses through the glutamine level. Under low glutamine levels, catalyzes the conversion of the PII proteins and UTP to PII-UMP and PPi, while under higher glutamine levels, GlnD hydrolyzes PII-UMP to PII and UMP (deuridylylation). Thus, controls uridylylation state and activity of the PII proteins, and plays an important role in the regulation of nitrogen fixation and metabolism. In Bradyrhizobium sp. (strain ORS 278), this protein is Bifunctional uridylyltransferase/uridylyl-removing enzyme.